Reading from the N-terminus, the 475-residue chain is Endoglucanase A (475 aa).

The signal sequence occupies residues 1–26 (MKKTTAFLLCFLMIFTALLPMQNANA). The active site involves histidine 147. Catalysis depends on glutamate 195, which acts as the Proton donor. The active-site Nucleophile is the glutamate 332. The 66-residue stretch at 409–474 (PVIVYGDYNN…LLGMVSKLPS (66 aa)) folds into the Dockerin domain.

It belongs to the glycosyl hydrolase 5 (cellulase A) family.

It carries out the reaction Endohydrolysis of (1-&gt;4)-beta-D-glucosidic linkages in cellulose, lichenin and cereal beta-D-glucans.. The biological conversion of cellulose to glucose generally requires three types of hydrolytic enzymes: (1) Endoglucanases which cut internal beta-1,4-glucosidic bonds; (2) Exocellobiohydrolases that cut the disaccharide cellobiose from the non-reducing end of the cellulose polymer chain; (3) Beta-1,4-glucosidases which hydrolyze the cellobiose and other short cello-oligosaccharides to glucose. This is Endoglucanase A (celCCA) from Ruminiclostridium cellulolyticum (strain ATCC 35319 / DSM 5812 / JCM 6584 / H10) (Clostridium cellulolyticum).